Here is a 156-residue protein sequence, read N- to C-terminus: Hexachlorocyclohexane dehydrochlorinase 2 (156 aa).

D25 is an active-site residue. H73 serves as the catalytic Proton acceptor.

It belongs to the HCH dehydrochlorinase family. In terms of assembly, homotrimer.

Its subcellular location is the periplasm. The catalysed reaction is gamma-hexachlorocyclohexane = (3R,4S,5S,6R)-pentachlorocyclohexene + chloride + H(+). It catalyses the reaction (3R,4S,5S,6R)-pentachlorocyclohexene = (3R,6R)-1,3,4,6-tetrachlorocyclohexa-1,4-diene + chloride + H(+). Its pathway is xenobiotic degradation; hexachlorocyclohexane degradation. Functionally, catalyzes the conversion of the important environmental pollutant gamma-hexachlorocyclohexane (gamma-HCH or lindane) to 1,3,4,6-tetrachloro-1,4-cyclohexadiene (1,4-TCDN) via gamma-pentachlorocyclohexene (gamma-PCCH). Proceeds by two successive 1,2-anti conformationally dependent dehydrochlorinations. Also shows activity with alpha- and delta-HCH, giving alpha- and delta-PCCH respectively, but not with the beta isomer. The polypeptide is Hexachlorocyclohexane dehydrochlorinase 2 (Sphingobium indicum (strain DSM 16412 / CCM 7286 / MTCC 6364 / B90A)).